The chain runs to 302 residues: NAD kinase (302 aa).

Catalysis depends on Asp79, which acts as the Proton acceptor. Residues 79 to 80, 153 to 154, Arg181, Asp183, 194 to 199, Ala218, and Gln252 each bind NAD(+); these read DG, ND, and TAYALS.

This sequence belongs to the NAD kinase family. Requires a divalent metal cation as cofactor.

The protein localises to the cytoplasm. The enzyme catalyses NAD(+) + ATP = ADP + NADP(+) + H(+). Its function is as follows. Involved in the regulation of the intracellular balance of NAD and NADP, and is a key enzyme in the biosynthesis of NADP. Catalyzes specifically the phosphorylation on 2'-hydroxyl of the adenosine moiety of NAD to yield NADP. The sequence is that of NAD kinase from Ralstonia nicotianae (strain ATCC BAA-1114 / GMI1000) (Ralstonia solanacearum).